The primary structure comprises 235 residues: Cytidylate kinase (235 aa).

11-19 (GPSGVGKST) contacts ATP.

This sequence belongs to the cytidylate kinase family. Type 1 subfamily.

Its subcellular location is the cytoplasm. It catalyses the reaction CMP + ATP = CDP + ADP. The catalysed reaction is dCMP + ATP = dCDP + ADP. This chain is Cytidylate kinase, found in Syntrophotalea carbinolica (strain DSM 2380 / NBRC 103641 / GraBd1) (Pelobacter carbinolicus).